A 129-amino-acid chain; its full sequence is MTYLFVAAGGALGSTLRYWLSGLIAGAIGQSFPWGTLVINISGSIVIGAFATLTGPDGRVFIPGDWRQFFMVGVCGGYTTFSSFSLQTLTLAQEGQGLWAAANVVLSVVFCLIGVWLGHVGAVLINEGV.

4 helical membrane passes run 4–24 (LFVAAGGALGSTLRYWLSGLI), 32–52 (FPWGTLVINISGSIVIGAFAT), 69–89 (FFMVGVCGGYTTFSSFSLQTL), and 105–125 (VLSVVFCLIGVWLGHVGAVLI). Residues G76 and T79 each contribute to the Na(+) site.

The protein belongs to the fluoride channel Fluc/FEX (TC 1.A.43) family.

The protein resides in the cell inner membrane. The enzyme catalyses fluoride(in) = fluoride(out). Its activity is regulated as follows. Na(+) is not transported, but it plays an essential structural role and its presence is essential for fluoride channel function. Its function is as follows. Fluoride-specific ion channel. Important for reducing fluoride concentration in the cell, thus reducing its toxicity. In Rhodospirillum rubrum (strain ATCC 11170 / ATH 1.1.1 / DSM 467 / LMG 4362 / NCIMB 8255 / S1), this protein is Fluoride-specific ion channel FluC.